A 224-amino-acid chain; its full sequence is Ribonuclease HII (224 aa).

Positions 1–210 (MKIGGIDEAG…VRKIEESIKA (210 aa)) constitute an RNase H type-2 domain. A divalent metal cation contacts are provided by Asp7, Glu8, and Asp105.

This sequence belongs to the RNase HII family. Requires Mn(2+) as cofactor. It depends on Mg(2+) as a cofactor.

Its subcellular location is the cytoplasm. It carries out the reaction Endonucleolytic cleavage to 5'-phosphomonoester.. Its function is as follows. Endonuclease that specifically degrades the RNA of RNA-DNA hybrids. The chain is Ribonuclease HII from Pyrococcus furiosus (strain ATCC 43587 / DSM 3638 / JCM 8422 / Vc1).